We begin with the raw amino-acid sequence, 282 residues long: Phospholipid phosphatase 1 (282 aa).

Residues 1-6 (MFDKPR) are Cytoplasmic-facing. The PDZ-binding; involved in localization to the apical cell membrane motif lies at 5-7 (PRL). A helical membrane pass occupies residues 7–27 (LPYVVLDVICVLLAGLPFIIL). Over 28 to 53 (TSRHTPFQRGVFCTDESIKYPYREDT) the chain is Extracellular. Residues 54–74 (IPYALLGGIVIPFCIIVMITG) traverse the membrane as a helical segment. Over 75–88 (ETLSVYFNVLHSNS) the chain is Cytoplasmic. Residues 89–109 (FVSNHYIATIYKAVGAFLFGA) form a helical membrane-spanning segment. Residues 110–164 (SASQSLTDIAKYSIGRLRPHFLAVCNPDWSKINCSDGYIENFVCQGNEQKVREGR) lie on the Extracellular side of the membrane. The phosphatase sequence motif I stretch occupies residues 120–128 (KYSIGRLRP). Asn-142 carries N-linked (GlcNAc...) asparagine glycosylation. The chain crosses the membrane as a helical span at residues 165-185 (LSFYSGHSSFSMYCMLFVALY). Positions 168–171 (YSGH) are phosphatase sequence motif II. The active-site Proton donors is His-171. Topologically, residues 186 to 194 (LQARMKGDW) are cytoplasmic. Residues 195 to 215 (ARLLRPMLQFGLVALSIYVGL) form a helical membrane-spanning segment. A phosphatase sequence motif III region spans residues 216–227 (SRVSDYKHHWSD). Residues 216 to 229 (SRVSDYKHHWSDVL) are Extracellular-facing. The active-site Nucleophile is the His-223. Residues 230-250 (IGLIQGAVVAILVVLYVTDFF) form a helical membrane-spanning segment. Residues 251–282 (KTTESNKERKEDSHTTLHETTNRQSYARNHEP) are Cytoplasmic-facing. Positions 257 to 271 (KERKEDSHTTLHETT) are enriched in basic and acidic residues. The interval 257–282 (KERKEDSHTTLHETTNRQSYARNHEP) is disordered. Positions 272–282 (NRQSYARNHEP) are enriched in polar residues.

Belongs to the PA-phosphatase related phosphoesterase family. As to quaternary structure, forms functional homodimers and homooligomers that are not required for substrate recognition and catalytic activity. Can also form heterooligomers with PLPP2 and PLPP3. N-glycosylated. N-linked sugars are of the complex type. N-glycosylation is not required for the phosphatase activity.

It is found in the cell membrane. The protein resides in the apical cell membrane. The protein localises to the membrane raft. Its subcellular location is the membrane. It localises to the caveola. It catalyses the reaction a 1,2-diacyl-sn-glycero-3-phosphate + H2O = a 1,2-diacyl-sn-glycerol + phosphate. The enzyme catalyses 1,2-dihexadecanoyl-sn-glycero-3-phosphate + H2O = 1,2-dihexadecanoyl-sn-glycerol + phosphate. It carries out the reaction 1,2-di-(9Z-octadecenoyl)-sn-glycero-3-phosphate + H2O = 1,2-di-(9Z-octadecenoyl)-sn-glycerol + phosphate. The catalysed reaction is a monoacyl-sn-glycero-3-phosphate + H2O = a monoacylglycerol + phosphate. It catalyses the reaction (9Z)-octadecenoyl-sn-glycero-3-phosphate + H2O = (9Z-octadecenoyl)-glycerol + phosphate. The enzyme catalyses a 1-acyl-sn-glycero-3-phosphate + H2O = a 1-acyl-sn-glycerol + phosphate. It carries out the reaction 1-(9Z-octadecenoyl)-sn-glycero-3-phosphate + H2O = 1-(9Z-octadecenoyl)-sn-glycerol + phosphate. The catalysed reaction is a 1,2-diacyl-sn-glycerol 3-diphosphate + H2O = a 1,2-diacyl-sn-glycero-3-phosphate + phosphate + H(+). It catalyses the reaction sphing-4-enine 1-phosphate + H2O = sphing-4-enine + phosphate. The enzyme catalyses an N-acylsphing-4-enine 1-phosphate + H2O = an N-acylsphing-4-enine + phosphate. It carries out the reaction N-(octanoyl)-sphing-4-enine-1-phosphate + H2O = N-octanoylsphing-4-enine + phosphate. The catalysed reaction is N-(9Z-octadecenoyl)-ethanolamine phosphate + H2O = N-(9Z-octadecenoyl) ethanolamine + phosphate. It catalyses the reaction 1-hexadecanoyl-2-(9Z-octadecenoyl)-sn-glycero-3-phosphate + H2O = 1-hexadecanoyl-2-(9Z-octadecenoyl)-sn-glycerol + phosphate. The protein operates within lipid metabolism; phospholipid metabolism. Magnesium-independent phospholipid phosphatase. Insensitive to N-ethylmaleimide. Its function is as follows. Magnesium-independent phospholipid phosphatase of the plasma membrane that catalyzes the dephosphorylation of a variety of glycerolipid and sphingolipid phosphate esters including phosphatidate/PA, lysophosphatidate/LPA, diacylglycerol pyrophosphate/DGPP, sphingosine 1-phosphate/S1P and ceramide 1-phosphate/C1P. Also acts on N-oleoyl ethanolamine phosphate/N-(9Z-octadecenoyl)-ethanolamine phosphate, a potential physiological compound. Through its extracellular phosphatase activity allows both the hydrolysis and the cellular uptake of these bioactive lipid mediators from the milieu, regulating signal transduction in different cellular processes. It is for instance essential for the extracellular hydrolysis of S1P and subsequent conversion into intracellular S1P. Involved in the regulation of inflammation, platelets activation, cell proliferation and migration among other processes. May also have an intracellular activity to regulate phospholipid-mediated signaling pathways. This chain is Phospholipid phosphatase 1, found in Rattus norvegicus (Rat).